An 87-amino-acid polypeptide reads, in one-letter code: MVNMKASMFLTFAGLVLLFVVCYASESEEKEFPKEMLSSIFAVDNDFKQEERDCAGYMRECKEKLCCNGYVCSSRWKWCVLPAPWRR.

The first 24 residues, 1–24, serve as a signal peptide directing secretion; it reads MVNMKASMFLTFAGLVLLFVVCYA. Residues 25-52 constitute a propeptide that is removed on maturation; it reads SESEEKEFPKEMLSSIFAVDNDFKQEER. 3 disulfides stabilise this stretch: cysteine 54–cysteine 67, cysteine 61–cysteine 72, and cysteine 66–cysteine 79.

Belongs to the neurotoxin 10 (Hwtx-1) family. 51 (Hntx-8) subfamily. Hntx-8 sub-subfamily. In terms of tissue distribution, expressed by the venom gland.

The protein resides in the secreted. In terms of biological role, ion channel inhibitor. The sequence is that of U3-theraphotoxin-Hhn1m from Cyriopagopus hainanus (Chinese bird spider).